Here is an 83-residue protein sequence, read N- to C-terminus: MKTIIFFIACLMLIDVVVESKDGYIIEHRGCKYSCFFGTNSWCNTECTLKKGSSGYCAWPACWCYGLPDNVKIFDSNNNKCGK.

The N-terminal stretch at 1–20 (MKTIIFFIACLMLIDVVVES) is a signal peptide. One can recognise an LCN-type CS-alpha/beta domain in the interval 21–82 (KDGYIIEHRG…IFDSNNNKCG (62 aa)). Cystine bridges form between Cys-31–Cys-81, Cys-35–Cys-57, Cys-43–Cys-62, and Cys-47–Cys-64. Residue Cys-81 is modified to Cysteine amide.

This sequence belongs to the long (4 C-C) scorpion toxin superfamily. Sodium channel inhibitor family. Beta subfamily. Expressed by the venom gland.

It localises to the secreted. In terms of biological role, inhibits the sodium currents (Nav) in an apparent irreversible manner. Produces small depolarization and induces repetitive firing in squid axons. Is specific for arthropods (crickets, triatomides, crabs and squids), but is non-toxic to mice. Shows antibacterial activity against both Gram-positive and Gram-negative bacteria. This is Toxin TdNa5 from Tityus discrepans (Venezuelan scorpion).